The primary structure comprises 345 residues: Ryncolin-1 (345 aa).

The signal sequence occupies residues 1–19; it reads MKPWAAFHLIFLVASSLEG. A disordered region spans residues 48–118; the sequence is ILQSQPGIPG…DKGDKGEDCN (71 aa). In terms of domain architecture, Collagen-like spans 57-114; sequence GIPGVPGTNGSEGLKGDPGPQGPPGIRGPDGIRGEAGPKGDKGDQGDKGDKGDKGDKG. Over residues 86–116 the composition is skewed to basic and acidic residues; sequence DGIRGEAGPKGDKGDQGDKGDKGDKGDKGED. Residues 121–339 form the Fibrinogen C-terminal domain; sequence GCLPTEVRNC…YADMKIRPQQ (219 aa). Disulfide bonds link C130–C158 and C282–C295.

Belongs to the ficolin lectin family. Veficolin subfamily. Hydroxylated, possibly at Pro-80. As to expression, expressed by the venom duct.

Its subcellular location is the secreted. In terms of biological role, initiates complement activation and/or interferes in platelet aggregation and/or blood coagulation. This chain is Ryncolin-1, found in Cerberus rynchops (Dog-faced water snake).